The primary structure comprises 250 residues: Small ribosomal subunit protein uS3 (250 aa).

Positions 39-111 constitute a KH type-2 domain; sequence IRQLINNFSK…DINLNILEVK (73 aa).

It belongs to the universal ribosomal protein uS3 family. In terms of assembly, part of the 30S ribosomal subunit. Forms a tight complex with proteins S10 and S14.

In terms of biological role, binds the lower part of the 30S subunit head. Binds mRNA in the 70S ribosome, positioning it for translation. The chain is Small ribosomal subunit protein uS3 from Phytoplasma australiense.